The primary structure comprises 136 residues: Large ribosomal subunit protein uL16 (136 aa).

Belongs to the universal ribosomal protein uL16 family. In terms of assembly, part of the 50S ribosomal subunit.

Its function is as follows. Binds 23S rRNA and is also seen to make contacts with the A and possibly P site tRNAs. This Shewanella pealeana (strain ATCC 700345 / ANG-SQ1) protein is Large ribosomal subunit protein uL16.